A 144-amino-acid polypeptide reads, in one-letter code: 6-pyruvoyl tetrahydrobiopterin synthase (144 aa).

Positions 1 to 4 are excised as a propeptide; that stretch reads MNAA. S18 carries the post-translational modification Phosphoserine. Position 23 (H23) interacts with Zn(2+). A Phosphoserine modification is found at S27. C42 (proton acceptor) is an active-site residue. Residues H48 and H50 each contribute to the Zn(2+) site. Residue H89 is the Charge relay system of the active site. Phosphotyrosine is present on Y127. E133 functions as the Charge relay system in the catalytic mechanism.

The protein belongs to the PTPS family. In terms of assembly, homohexamer formed of two homotrimers in a head to head fashion. The cofactor is Zn(2+). Phosphorylation of Ser-18 is required for maximal enzyme activity.

The catalysed reaction is 7,8-dihydroneopterin 3'-triphosphate = 6-pyruvoyl-5,6,7,8-tetrahydropterin + triphosphate + H(+). Its pathway is cofactor biosynthesis; tetrahydrobiopterin biosynthesis; tetrahydrobiopterin from 7,8-dihydroneopterin triphosphate: step 1/3. Involved in the biosynthesis of tetrahydrobiopterin, an essential cofactor of aromatic amino acid hydroxylases. Catalyzes the transformation of 7,8-dihydroneopterin triphosphate into 6-pyruvoyl tetrahydropterin. The protein is 6-pyruvoyl tetrahydrobiopterin synthase (Pts) of Rattus norvegicus (Rat).